The sequence spans 355 residues: Cyclin-D1-binding protein 1 (355 aa).

N-acetylalanine is present on alanine 2. 2 interaction with TCF3 regions span residues 2-181 (ASST…VDLV) and 147-355 (ISCN…AVEL). The interval 2–187 (ASSTTPVSFL…VDLVKDAHEE (186 aa)) is interaction with RPLP0. The tract at residues 2-205 (ASSTTPVSFL…DPYCGLLDDS (204 aa)) is required for interaction with CCND1. The tract at residues 203 to 224 (DDSEDNSDSHHNEDGVGLPSNR) is disordered. The interaction with RPLP0 stretch occupies residues 235-355 (LITPCLALVR…KELTQRAVEL (121 aa)).

It belongs to the CCNDBP1 family. As to quaternary structure, interacts with CCND1 and GRAP2. May also interact with COPS5, RPLP0, SIRT6, SYF2 and TCF3. Post-translationally, phosphorylated.

It is found in the cytoplasm. The protein localises to the nucleus. Functionally, may negatively regulate cell cycle progression. May act at least in part via inhibition of the cyclin-D1/CDK4 complex, thereby preventing phosphorylation of RB1 and blocking E2F-dependent transcription. This chain is Cyclin-D1-binding protein 1 (Ccndbp1), found in Rattus norvegicus (Rat).